Here is a 509-residue protein sequence, read N- to C-terminus: Aromatase (509 aa).

Residue cysteine 437 coordinates heme.

Belongs to the cytochrome P450 family. The cofactor is heme.

It is found in the membrane. The enzyme catalyses testosterone + 3 reduced [NADPH--hemoprotein reductase] + 3 O2 = 17beta-estradiol + formate + 3 oxidized [NADPH--hemoprotein reductase] + 4 H2O + 4 H(+). The catalysed reaction is androst-4-ene-3,17-dione + 3 reduced [NADPH--hemoprotein reductase] + 3 O2 = estrone + formate + 3 oxidized [NADPH--hemoprotein reductase] + 4 H2O + 4 H(+). Catalyzes the formation of aromatic C18 estrogens from C19 androgens. This is Aromatase (CYP19A1) from Taeniopygia guttata (Zebra finch).